Reading from the N-terminus, the 535-residue chain is MTKYIFVTGGVVSSLGKGITAASLGRLLKNRGMDVTIQKFDPYINVDPGTMSPYQHGEVFVTDDGAETDLDLGHYERFIDINLNKYSNVTTGKIYSTVLKKERRGDYLGGTVQVIPHITNEIKDRVYRAGKETGADVVITEIGGTVGDIESLPFLEAIRQMKSDIGRENVMYIHCTLVPYIRAAGELKTKPTQHSVKELRSLGIQPNVIVVRTEMPMTQDMKDKIALFCDIDTKAVIECQDADTLYSIPLDLQKQGLDKLVCEHMKLDCQDADMTEWTALVDKVQNLSKQVTIGLVGKYVELQDAYISVVESLRHAGYAFDADVQIKWINAEEVTAENMADFAQDVDGIIVPGGFGDRGVEGKIIATQYARENKVPFFGICLGMQVASIEYARNVLGLEGAHSAEIDPETAFPIIDLLPEQKDVDDLGGTLRLGLYPCKLNEDSKAFAAYNDEVVYERHRHRYEFNNEFRQQMEAAGFVFSGTSPDGRLVEIIELKDHPWFLASQFHPEFVSRPTRPQPLFRDFVGASLQASESK.

Residues 1–267 (MTKYIFVTGG…DKLVCEHMKL (267 aa)) are amidoligase domain. Residue serine 13 coordinates CTP. Serine 13 contributes to the UTP binding site. Residue 14–19 (SLGKGI) participates in ATP binding. An L-glutamine-binding site is contributed by tyrosine 54. Aspartate 71 contacts ATP. The Mg(2+) site is built by aspartate 71 and glutamate 141. Residues 148–150 (DIE), 188–193 (KTKPTQ), and lysine 224 contribute to the CTP site. UTP contacts are provided by residues 188–193 (KTKPTQ) and lysine 224. In terms of domain architecture, Glutamine amidotransferase type-1 spans 292–534 (TIGLVGKYVE…VGASLQASES (243 aa)). Glycine 354 serves as a coordination point for L-glutamine. The active-site Nucleophile; for glutamine hydrolysis is cysteine 381. Residues 382-385 (LGMQ), glutamate 405, and arginine 462 contribute to the L-glutamine site. Catalysis depends on residues histidine 507 and glutamate 509.

Belongs to the CTP synthase family. In terms of assembly, homotetramer.

It catalyses the reaction UTP + L-glutamine + ATP + H2O = CTP + L-glutamate + ADP + phosphate + 2 H(+). The catalysed reaction is L-glutamine + H2O = L-glutamate + NH4(+). The enzyme catalyses UTP + NH4(+) + ATP = CTP + ADP + phosphate + 2 H(+). The protein operates within pyrimidine metabolism; CTP biosynthesis via de novo pathway; CTP from UDP: step 2/2. With respect to regulation, allosterically activated by GTP, when glutamine is the substrate; GTP has no effect on the reaction when ammonia is the substrate. The allosteric effector GTP functions by stabilizing the protein conformation that binds the tetrahedral intermediate(s) formed during glutamine hydrolysis. Inhibited by the product CTP, via allosteric rather than competitive inhibition. Functionally, catalyzes the ATP-dependent amination of UTP to CTP with either L-glutamine or ammonia as the source of nitrogen. Regulates intracellular CTP levels through interactions with the four ribonucleotide triphosphates. This Bacillus pumilus (strain SAFR-032) protein is CTP synthase.